Reading from the N-terminus, the 554-residue chain is Arginine--tRNA ligase (554 aa).

The short motif at Ala129–His139 is the 'HIGH' region element.

The protein belongs to the class-I aminoacyl-tRNA synthetase family. As to quaternary structure, monomer.

The protein localises to the cytoplasm. The enzyme catalyses tRNA(Arg) + L-arginine + ATP = L-arginyl-tRNA(Arg) + AMP + diphosphate. This chain is Arginine--tRNA ligase, found in Syntrophotalea carbinolica (strain DSM 2380 / NBRC 103641 / GraBd1) (Pelobacter carbinolicus).